Consider the following 268-residue polypeptide: Leucyl/phenylalanyl-tRNA--protein transferase (268 aa).

It belongs to the L/F-transferase family.

Its subcellular location is the cytoplasm. The catalysed reaction is N-terminal L-lysyl-[protein] + L-leucyl-tRNA(Leu) = N-terminal L-leucyl-L-lysyl-[protein] + tRNA(Leu) + H(+). The enzyme catalyses N-terminal L-arginyl-[protein] + L-leucyl-tRNA(Leu) = N-terminal L-leucyl-L-arginyl-[protein] + tRNA(Leu) + H(+). It catalyses the reaction L-phenylalanyl-tRNA(Phe) + an N-terminal L-alpha-aminoacyl-[protein] = an N-terminal L-phenylalanyl-L-alpha-aminoacyl-[protein] + tRNA(Phe). Functionally, functions in the N-end rule pathway of protein degradation where it conjugates Leu, Phe and, less efficiently, Met from aminoacyl-tRNAs to the N-termini of proteins containing an N-terminal arginine or lysine. The chain is Leucyl/phenylalanyl-tRNA--protein transferase from Psychrobacter arcticus (strain DSM 17307 / VKM B-2377 / 273-4).